The chain runs to 47 residues: Thionin (47 aa).

Cystine bridges form between Cys3–Cys41, Cys4–Cys33, Cys12–Cys31, and Cys16–Cys27.

Belongs to the plant thionin (TC 1.C.44) family. 4 C-C subfamily.

Its subcellular location is the secreted. Its function is as follows. Thionins are small plant proteins which are toxic to animal cells. They seem to exert their toxic effect at the level of the cell membrane. Their precise function is not known. The polypeptide is Thionin (THI1) (Pyrularia pubera (Buffalo nut)).